A 241-amino-acid chain; its full sequence is Phosphoribosylaminoimidazole-succinocarboxamide synthase (241 aa).

This sequence belongs to the SAICAR synthetase family.

The enzyme catalyses 5-amino-1-(5-phospho-D-ribosyl)imidazole-4-carboxylate + L-aspartate + ATP = (2S)-2-[5-amino-1-(5-phospho-beta-D-ribosyl)imidazole-4-carboxamido]succinate + ADP + phosphate + 2 H(+). It participates in purine metabolism; IMP biosynthesis via de novo pathway; 5-amino-1-(5-phospho-D-ribosyl)imidazole-4-carboxamide from 5-amino-1-(5-phospho-D-ribosyl)imidazole-4-carboxylate: step 1/2. This is Phosphoribosylaminoimidazole-succinocarboxamide synthase from Latilactobacillus sakei subsp. sakei (strain 23K) (Lactobacillus sakei subsp. sakei).